The primary structure comprises 277 residues: Bifunctional protein FolD (277 aa).

NADP(+) is bound by residues glycine 164–serine 166, serine 189, and threonine 230.

It belongs to the tetrahydrofolate dehydrogenase/cyclohydrolase family. Homodimer.

It catalyses the reaction (6R)-5,10-methylene-5,6,7,8-tetrahydrofolate + NADP(+) = (6R)-5,10-methenyltetrahydrofolate + NADPH. It carries out the reaction (6R)-5,10-methenyltetrahydrofolate + H2O = (6R)-10-formyltetrahydrofolate + H(+). It functions in the pathway one-carbon metabolism; tetrahydrofolate interconversion. Its function is as follows. Catalyzes the oxidation of 5,10-methylenetetrahydrofolate to 5,10-methenyltetrahydrofolate and then the hydrolysis of 5,10-methenyltetrahydrofolate to 10-formyltetrahydrofolate. In Clostridium perfringens (strain 13 / Type A), this protein is Bifunctional protein FolD.